The primary structure comprises 338 residues: Anthranilate phosphoribosyltransferase (338 aa).

5-phospho-alpha-D-ribose 1-diphosphate-binding positions include glycine 80, 83–84 (GD), threonine 88, 90–93 (NIST), 108–116 (KHGNRAMSS), and serine 120. Residue glycine 80 participates in anthranilate binding. Serine 92 serves as a coordination point for Mg(2+). Asparagine 111 is a binding site for anthranilate. Residue arginine 166 coordinates anthranilate. Mg(2+)-binding residues include aspartate 225 and glutamate 226.

The protein belongs to the anthranilate phosphoribosyltransferase family. In terms of assembly, homodimer. Mg(2+) is required as a cofactor.

The enzyme catalyses N-(5-phospho-beta-D-ribosyl)anthranilate + diphosphate = 5-phospho-alpha-D-ribose 1-diphosphate + anthranilate. Its pathway is amino-acid biosynthesis; L-tryptophan biosynthesis; L-tryptophan from chorismate: step 2/5. Catalyzes the transfer of the phosphoribosyl group of 5-phosphorylribose-1-pyrophosphate (PRPP) to anthranilate to yield N-(5'-phosphoribosyl)-anthranilate (PRA). The polypeptide is Anthranilate phosphoribosyltransferase (Herpetosiphon aurantiacus (strain ATCC 23779 / DSM 785 / 114-95)).